Consider the following 202-residue polypeptide: ATP-dependent Clp protease proteolytic subunit (202 aa).

Residue Ser-98 is the Nucleophile of the active site. The active site involves His-123.

It belongs to the peptidase S14 family. As to quaternary structure, fourteen ClpP subunits assemble into 2 heptameric rings which stack back to back to give a disk-like structure with a central cavity, resembling the structure of eukaryotic proteasomes.

Its subcellular location is the cytoplasm. It catalyses the reaction Hydrolysis of proteins to small peptides in the presence of ATP and magnesium. alpha-casein is the usual test substrate. In the absence of ATP, only oligopeptides shorter than five residues are hydrolyzed (such as succinyl-Leu-Tyr-|-NHMec, and Leu-Tyr-Leu-|-Tyr-Trp, in which cleavage of the -Tyr-|-Leu- and -Tyr-|-Trp bonds also occurs).. In terms of biological role, cleaves peptides in various proteins in a process that requires ATP hydrolysis. Has a chymotrypsin-like activity. Plays a major role in the degradation of misfolded proteins. The polypeptide is ATP-dependent Clp protease proteolytic subunit (Solidesulfovibrio magneticus (strain ATCC 700980 / DSM 13731 / RS-1) (Desulfovibrio magneticus)).